The following is a 613-amino-acid chain: Probable potassium transport system protein Kup 1 (613 aa).

The next 12 helical transmembrane spans lie at 40 to 60 (VLSMLFWSMTLVVSIKYVVFV), 93 to 113 (MLLGLLGASMFYGDAVITPAI), 127 to 147 (PALQPWVLPLSLIVLVGLFLL), 158 to 178 (LFGPVMLFWFVLLGLIGLFSV), 201 to 221 (AVQAFIVFGSVFLALTGAEAL), 237 to 257 (WFYIAMPCLLLNYFGQGALLL), 266 to 286 (PFFLLMPTWAVAPTIVLATAA), 288 to 308 (VIASQAVISGAFSMTAQAVHL), 327 to 347 (IYVPVVNYALLLLVVAVVLAF), 356 to 376 (AYGIAVTTTMLLTTGLVTVVM), 384 to 404 (LPAVALLGTVFLAVDLSFFGA), and 409 to 429 (VAAGGWFPLLLGGLIFFLMVT).

This sequence belongs to the HAK/KUP transporter (TC 2.A.72) family.

It localises to the cell inner membrane. It carries out the reaction K(+)(in) + H(+)(in) = K(+)(out) + H(+)(out). Functionally, transport of potassium into the cell. Likely operates as a K(+):H(+) symporter. In Ralstonia nicotianae (strain ATCC BAA-1114 / GMI1000) (Ralstonia solanacearum), this protein is Probable potassium transport system protein Kup 1.